The primary structure comprises 574 residues: Frizzled and smoothened-like protein G (574 aa).

The signal sequence occupies residues 1-19; sequence MKSIIFITFFIFFLKKLNG. Residues 20–246 lie on the Extracellular side of the membrane; that stretch reads LPNGYGVGLV…EKWNQIENLS (227 aa). An FZ domain is found at 30–181; it reads DPNGQCMNYI…GLYEVPCFNP (152 aa). Intrachain disulfides connect Cys-35/Cys-109, Cys-48/Cys-102, Cys-91/Cys-138, and Cys-127/Cys-178. 6 N-linked (GlcNAc...) asparagine glycosylation sites follow: Asn-119, Asn-161, Asn-187, Asn-206, Asn-233, and Asn-244. Residues 247–267 form a helical membrane-spanning segment; the sequence is KVLSTISFVCSIYNILSFGIL. Topologically, residues 268–273 are cytoplasmic; sequence KKKKTK. A helical membrane pass occupies residues 274 to 294; sequence YTICISALSASVALINLGDII. Residues 295 to 324 are Extracellular-facing; that stretch reads KIGVGYEKVLCPEPGRFATQVDDPLCGLTA. The helical transmembrane segment at 325-345 threads the bilayer; that stretch reads ALFHVGICSTVLWTTTMAIYL. At 346 to 358 the chain is on the cytoplasmic side; it reads YSAIKNIKLFKFR. The helical transmembrane segment at 359–379 threads the bilayer; the sequence is YFIIFNTGFSLTSLIIAASAS. Residues 380–401 are Extracellular-facing; the sequence is KFEAGTGSIECWIRDRWYSICL. The helical transmembrane segment at 402–422 threads the bilayer; that stretch reads FWLPCGICLLIGTICIASVIV. At 423-445 the chain is on the cytoplasmic side; it reads EIYKVSKNIKLSESETIMRQIKP. A helical membrane pass occupies residues 446-466; sequence IISVILVSGSFTYLFIIFFDI. The Extracellular portion of the chain corresponds to 467–502; sequence ERNFGGYRSAVTDYVLCLLNSTDNGIECHTSGPSYN. Asn-486 carries an N-linked (GlcNAc...) asparagine glycan. Residues 503–523 form a helical membrane-spanning segment; that stretch reads PYFMFYFFMRFFGILFFLIYG. Over 524–574 the chain is Cytoplasmic; sequence TSKNARDSWYELFIKIKVSLSETSSTISNNSGGGSSQQKQQQQNEIKLEKI. Positions 550 to 568 are enriched in low complexity; sequence ISNNSGGGSSQQKQQQQNE. Residues 550 to 574 are disordered; the sequence is ISNNSGGGSSQQKQQQQNEIKLEKI.

The protein belongs to the G-protein coupled receptor Fz/Smo family.

Its subcellular location is the membrane. In Dictyostelium discoideum (Social amoeba), this protein is Frizzled and smoothened-like protein G (fslG).